Here is a 559-residue protein sequence, read N- to C-terminus: Phosphatase and actin regulator 3 (559 aa).

A disordered region spans residues 1–65 (MAASEDGSGC…GIRTPPVRRN (65 aa)). The segment covering 15–24 (GRSQSDPSVL) has biased composition (polar residues). Over residues 25 to 35 (TDSSATSSADA) the composition is skewed to low complexity. T70 is subject to Phosphothreonine. Residues 82-342 (KKKNEKLKQT…VERGKEREEA (261 aa)) are disordered. One copy of the RPEL 1 repeat lies at 93 to 118 (SALEKKMAGRQGREELIKKGLLEMME). Residues 95–113 (LEKKMAGRQGREELIKKGL) show a composition bias toward basic and acidic residues. Residues 134-151 (SVQSEPPTPKSETLTSED) show a composition bias toward polar residues. Pro residues predominate over residues 229 to 240 (PSPPLLPTPPPK). S230 bears the Phosphoserine mark. A Phosphothreonine modification is found at T236. Composition is skewed to polar residues over residues 248–262 (NVTG…SSMK) and 270–281 (GQLSTPTGSPHL). Residues 293–342 (VIEELHRALATKHRQDSFQGRESKGSPKKRLDVRLSRTSSVERGKEREEA) are compositionally biased toward basic and acidic residues. A coiled-coil region spans residues 346–369 (DGALENKRTAAKESEENKENLIIN). 3 RPEL repeats span residues 401–426 (ELLA…PRRT), 439–464 (MKLS…KQRN), and 477–502 (QRLT…IRFS). The segment at 438 to 518 (EMKLSKRLSQ…KAQDYDRRAD (81 aa)) is required for PP1CA binding and inhibition of PP1 activity. The stretch at 450 to 486 (AVEELERRNILKQRNDQTEQEERREIKQRLTRKLNQR) forms a coiled coil.

The protein belongs to the phosphatase and actin regulator family. Binds actin and PPP1CA; thus inhibiting the protein phosphatase 1 (PP1) activity. In terms of tissue distribution, abundantly expressed in brain. Also found in several tumors such as lung carcinomas, nervous tumors and HL-60 leukemia cells. Isoform 3 is the major form in U-937, GOTO and HL-60 leukemia cells.

It localises to the nucleus matrix. This Homo sapiens (Human) protein is Phosphatase and actin regulator 3 (PHACTR3).